A 344-amino-acid polypeptide reads, in one-letter code: Centromere protein L (344 aa).

The interval 1-32 (MAGGRPAGSAIEMEGAMRTLPSSGRPSGTGWQ) is disordered. A compositionally biased stretch (polar residues) spans 20–32 (LPSSGRPSGTGWQ).

This sequence belongs to the CENP-L/IML3 family. Component of the CENPA-HI complex, at least composed of CENPH, CENPI, CENPK, CENPL, CENPM, CENPO and CENPP.

Its subcellular location is the nucleus. It is found in the chromosome. The protein resides in the centromere. Functionally, component of the CENPA-HI complex, a centromeric complex involved in assembly of kinetochore proteins, mitotic progression and chromosome segregation. In Gallus gallus (Chicken), this protein is Centromere protein L (CENPL).